A 256-amino-acid chain; its full sequence is Enkurin (256 aa).

The short motif at 83–89 is the SH3-binding element; sequence PKKPAVP. Positions 160 to 252 constitute an Enkurin domain; it reads KRNEEIKKAQ…IIEKHKIIYI (93 aa). The interval 160 to 255 is interaction with TRPC proteins; that stretch reads KRNEEIKKAQ…KHKIIYIANN (96 aa). An IQ domain is found at 176–187; sequence IQENLKKAAMKR.

Microtubule inner protein component of sperm flagellar doublet microtubules. Binds calmodulin via its IQ domain. Interacts with TRPC1, TRPC2, TRPC5, but not TRPC3. Interacts with CFAP45. Expressed in airway epithelial cells.

It localises to the cytoplasm. The protein resides in the cytoskeleton. It is found in the cilium axoneme. The protein localises to the flagellum axoneme. Adapter that functions to localize a calcium-sensitive signal transduction machinery in sperm to a calcium-permeable ion channel. Microtubule inner protein (MIP) part of the dynein-decorated doublet microtubules (DMTs) in cilia axoneme, which is required for motile cilia beating. This chain is Enkurin, found in Homo sapiens (Human).